Consider the following 462-residue polypeptide: Chromosomal replication initiator protein DnaA (462 aa).

The domain I, interacts with DnaA modulators stretch occupies residues 1-83 (MSLSLWQQCL…LRFEVGSKPA (83 aa)). The tract at residues 83–125 (AVRAHSHPVTASVSAPVAPVTRSAPVRPSWDSSPAQPELSYRS) is domain II. The tract at residues 105 to 127 (SAPVRPSWDSSPAQPELSYRSNV) is disordered. Residues 112 to 127 (WDSSPAQPELSYRSNV) are compositionally biased toward polar residues. Residues 126-342 (NVNPKHTFDN…GALNRVIANA (217 aa)) are domain III, AAA+ region. Residues G170, G172, K173, and T174 each contribute to the ATP site. A domain IV, binds dsDNA region spans residues 343-462 (NFTGRAITID…FSNLIRTLSS (120 aa)).

It belongs to the DnaA family. In terms of assembly, oligomerizes as a right-handed, spiral filament on DNA at oriC.

It localises to the cytoplasm. In terms of biological role, plays an essential role in the initiation and regulation of chromosomal replication. ATP-DnaA binds to the origin of replication (oriC) to initiate formation of the DNA replication initiation complex once per cell cycle. Binds the DnaA box (a 9 base pair repeat at the origin) and separates the double-stranded (ds)DNA. Forms a right-handed helical filament on oriC DNA; dsDNA binds to the exterior of the filament while single-stranded (ss)DNA is stabiized in the filament's interior. The ATP-DnaA-oriC complex binds and stabilizes one strand of the AT-rich DNA unwinding element (DUE), permitting loading of DNA polymerase. After initiation quickly degrades to an ADP-DnaA complex that is not apt for DNA replication. Binds acidic phospholipids. This chain is Chromosomal replication initiator protein DnaA, found in Yersinia enterocolitica serotype O:8 / biotype 1B (strain NCTC 13174 / 8081).